The primary structure comprises 291 residues: N-acetylmannosamine kinase (291 aa).

ATP is bound by residues 5-12 (AIDIGGTK) and 132-139 (GVGGGVVC). The Zn(2+) site is built by histidine 156, cysteine 166, cysteine 168, and cysteine 173.

The protein belongs to the ROK (NagC/XylR) family. NanK subfamily. In terms of assembly, homodimer.

It carries out the reaction an N-acyl-D-mannosamine + ATP = an N-acyl-D-mannosamine 6-phosphate + ADP + H(+). It participates in amino-sugar metabolism; N-acetylneuraminate degradation; D-fructose 6-phosphate from N-acetylneuraminate: step 2/5. Its function is as follows. Catalyzes the phosphorylation of N-acetylmannosamine (ManNAc) to ManNAc-6-P. This Salmonella paratyphi B (strain ATCC BAA-1250 / SPB7) protein is N-acetylmannosamine kinase.